Consider the following 501-residue polypeptide: Aspartate--tRNA ligase, cytoplasmic (501 aa).

Threonine 52 carries the post-translational modification Phosphothreonine. Lysine 74 carries the post-translational modification N6-acetyllysine. Glutamate 229 lines the L-aspartate pocket. Phosphoserine is present on serine 249. Positions 251–254 are aspartate; sequence QLYK. Arginine 273 contacts L-aspartate. ATP-binding positions include 273-275 and 281-283; these read RAE and RHL. The residue at position 374 (lysine 374) is an N6-acetyllysine. A binding site for the 3'-end of tRNA region spans residues 411-415; that stretch reads KQSNS. Residue glutamate 424 participates in ATP binding. L-aspartate contacts are provided by serine 427 and arginine 431. Residue 472 to 475 participates in ATP binding; it reads GLER. Position 500 is a phosphothreonine; by PKA (threonine 500).

The protein belongs to the class-II aminoacyl-tRNA synthetase family. Type 2 subfamily. Homodimer. Part of a multisubunit complex that groups tRNA ligases for Arg (RARS1), Asp (DARS1), Gln (QARS1), Ile (IARS1), Leu (LARS1), Lys (KARS1), Met (MARS1) the bifunctional ligase for Glu and Pro (EPRS1) and the auxiliary subunits AIMP1/p43, AIMP2/p38 and EEF1E1/p18. Expression in the developing and adult brain shows similar patterns. Highly expressed in the ventricular and subventricular zones, including hippocampal subfields, the midlateral temporal cortex and the frontal polar cortex. The cerebellum, cerebral cortex, hippocampus, and lateral ventricle show preferential neuronal expression. Expression in the peripheral neurons is evident in the colon.

The protein resides in the cytoplasm. The protein localises to the cytosol. The enzyme catalyses tRNA(Asp) + L-aspartate + ATP = L-aspartyl-tRNA(Asp) + AMP + diphosphate. In terms of biological role, catalyzes the specific attachment of an amino acid to its cognate tRNA in a 2 step reaction: the amino acid (AA) is first activated by ATP to form AA-AMP and then transferred to the acceptor end of the tRNA. The polypeptide is Aspartate--tRNA ligase, cytoplasmic (Homo sapiens (Human)).